Reading from the N-terminus, the 264-residue chain is ATP synthase subunit a (264 aa).

Helical transmembrane passes span 29–49, 89–109, 134–154, 177–197, 208–228, and 235–255; these read TWHI…LWLF, VIAP…FMDM, DLNI…YYSI, IPVN…SLAL, LIFI…TLGV, and LIFH…LTIV.

This sequence belongs to the ATPase A chain family. F-type ATPases have 2 components, CF(1) - the catalytic core - and CF(0) - the membrane proton channel. CF(1) has five subunits: alpha(3), beta(3), gamma(1), delta(1), epsilon(1). CF(0) has three main subunits: a(1), b(2) and c(9-12). The alpha and beta chains form an alternating ring which encloses part of the gamma chain. CF(1) is attached to CF(0) by a central stalk formed by the gamma and epsilon chains, while a peripheral stalk is formed by the delta and b chains.

It localises to the cell inner membrane. In terms of biological role, key component of the proton channel; it plays a direct role in the translocation of protons across the membrane. This Shewanella woodyi (strain ATCC 51908 / MS32) protein is ATP synthase subunit a.